We begin with the raw amino-acid sequence, 230 residues long: Inactive 2-(S)-hydroxypropyl-CoM dehydrogenase 2 (230 aa).

It belongs to the short-chain dehydrogenases/reductases (SDR) family.

In Xanthobacter autotrophicus (strain ATCC BAA-1158 / Py2), this protein is Inactive 2-(S)-hydroxypropyl-CoM dehydrogenase 2.